A 559-amino-acid chain; its full sequence is Cation/calcium exchanger 2 (559 aa).

Transmembrane regions (helical) follow at residues 10–30, 86–106, 131–151, 167–187, 203–223, 224–244, 331–351, 362–382, 393–413, 416–436, 480–500, 506–526, and 531–551; these read FGYLTVTFLLVISCLLLGFFT, GFPILGQFLLFLWLLLLFYLL, VAGVTLLSLGNGAPDLFASLV, TVVGGSGFVTCVVVGIISISL, ICFFCAAIGSLALILVYGKIN, FWGALGFCSLYAVYVAFVVLS, WSKPLAVASVTFAPVLLSFLW, AGVVYLIGCLIGIALGFIAGA, WLLPWLAGGFVMSMTWSYISA, LVALLTSLGYIFGVSPSILGL, FALGISLVGCAWEAYPLSIVI, LLESLGFLVAGLVWSFLVLFS, and LGGVMGIGLLVIYLASLSLRI.

Belongs to the Ca(2+):cation antiporter (CaCA) (TC 2.A.19) family. Cation/calcium exchanger (CCX) subfamily.

The protein localises to the membrane. Membrane-localized H(+)-dependent K(+) and Na(+) transporter. The sequence is that of Cation/calcium exchanger 2 (CCX2) from Arabidopsis thaliana (Mouse-ear cress).